The sequence spans 195 residues: Thymidine kinase (195 aa).

ATP contacts are provided by residues 15–22 (GSMFSGKT) and 91–94 (DEAN). E92 serves as the catalytic Proton acceptor. Zn(2+) is bound by residues C148, C151, C186, and C189.

The protein belongs to the thymidine kinase family. Homotetramer.

It localises to the cytoplasm. It carries out the reaction thymidine + ATP = dTMP + ADP + H(+). The polypeptide is Thymidine kinase (Halobacterium salinarum (strain ATCC 29341 / DSM 671 / R1)).